The primary structure comprises 556 residues: Formate--tetrahydrofolate ligase (556 aa).

Thr65–Ser72 is a binding site for ATP.

This sequence belongs to the formate--tetrahydrofolate ligase family.

It catalyses the reaction (6S)-5,6,7,8-tetrahydrofolate + formate + ATP = (6R)-10-formyltetrahydrofolate + ADP + phosphate. It functions in the pathway one-carbon metabolism; tetrahydrofolate interconversion. The chain is Formate--tetrahydrofolate ligase from Streptococcus mutans serotype c (strain ATCC 700610 / UA159).